The chain runs to 234 residues: Preflagellin peptidase (234 aa).

Position 1 (M1) is a topological domain, cytoplasmic. The helical transmembrane segment at 2-18 (INFIVGAIGLLIASIYD) threads the bilayer. Residues 19–23 (LKSRE) lie on the Extracellular side of the membrane. A helical transmembrane segment spans residues 24–46 (IEDYVWVSMVIFGLIYNGYLSFI). The Cytoplasmic portion of the chain corresponds to 47–49 (SHD). The helical transmembrane segment at 50–72 (MLYVIQSIVGFIVCFFLGFFMFL) threads the bilayer. Over 73–78 (LGVGGG) the chain is Extracellular. A helical membrane pass occupies residues 79–89 (DGKLIMGLGAL). At 90–110 (IPKYNMPIHTPLGAILNYLYL) the chain is on the cytoplasmic side. The helical transmembrane segment at 111–139 (PSFPIMVVINAMFFSITLPIIIFLRNVIR) threads the bilayer. Residues 140-205 (GVKPKTKKEV…EEIWVTPAIP (66 aa)) lie on the Extracellular side of the membrane. The helical transmembrane segment at 206-217 (FVVPIFLSYLLT) threads the bilayer. The Cytoplasmic portion of the chain corresponds to 218–234 (SIIGDKIIGIFLSVFGL).

Belongs to the peptidase A24 family. Archaeal preflagellin peptidase subfamily.

The protein resides in the cell membrane. It carries out the reaction Cleaves the signal peptide of 3 to 12 amino acids from the N-terminal of preflagellin, usually at Arg-Gly-|- or Lys-Gly-|-, to release flagellin.. In terms of biological role, cleaves the N-terminal leader peptide from preflagellins. This is Preflagellin peptidase (flaK) from Methanocaldococcus jannaschii (strain ATCC 43067 / DSM 2661 / JAL-1 / JCM 10045 / NBRC 100440) (Methanococcus jannaschii).